The primary structure comprises 442 residues: D-serine dehydratase (442 aa).

At lysine 118 the chain carries N6-(pyridoxal phosphate)lysine.

This sequence belongs to the serine/threonine dehydratase family. DsdA subfamily. In terms of assembly, monomer. Pyridoxal 5'-phosphate is required as a cofactor.

The enzyme catalyses D-serine = pyruvate + NH4(+). The polypeptide is D-serine dehydratase (Shigella flexneri serotype 5b (strain 8401)).